The following is a 345-amino-acid chain: Phosphoribosylformylglycinamidine cyclo-ligase (345 aa).

This sequence belongs to the AIR synthase family.

Its subcellular location is the cytoplasm. It catalyses the reaction 2-formamido-N(1)-(5-O-phospho-beta-D-ribosyl)acetamidine + ATP = 5-amino-1-(5-phospho-beta-D-ribosyl)imidazole + ADP + phosphate + H(+). It participates in purine metabolism; IMP biosynthesis via de novo pathway; 5-amino-1-(5-phospho-D-ribosyl)imidazole from N(2)-formyl-N(1)-(5-phospho-D-ribosyl)glycinamide: step 2/2. The protein is Phosphoribosylformylglycinamidine cyclo-ligase of Sodalis glossinidius (strain morsitans).